An 898-amino-acid polypeptide reads, in one-letter code: Serine/threonine-protein kinase TAO3 (898 aa).

In terms of domain architecture, Protein kinase spans 24–277 (FIGLHEIGHG…SAELLRHDFV (254 aa)). ATP-binding positions include 30–38 (IGHGSFGAV) and Lys53. Catalysis depends on Asp147, which acts as the Proton acceptor. Disordered stretches follow at residues 316 to 362 (TRNG…SQSS) and 405 to 425 (DEAG…VQSQ). Residue Ser324 is modified to Phosphoserine; by ATM. Ser331, Ser343, Ser346, and Ser349 each carry phosphoserine. The segment covering 334 to 351 (GTSLNREMDSLGSNHSIP) has biased composition (polar residues). The segment covering 352-362 (SMSVSTGSQSS) has biased composition (low complexity). Thr357 is modified (phosphothreonine). Residue Ser359 is modified to Phosphoserine. Residues 405–416 (DEAGHGDPRPEP) show a composition bias toward basic and acidic residues. Phosphoserine is present on Ser442. Coiled coils occupy residues 452–502 (EQEN…THAN), 548–649 (FLES…HAML), and 754–879 (LKTL…DMES). The disordered stretch occupies residues 565–596 (EEMNEDHSTPKKEKQERISKHKENLQHTQAEE). Residue Lys830 is modified to N6-acetyllysine.

Belongs to the protein kinase superfamily. STE Ser/Thr protein kinase family. STE20 subfamily. Self-associates. Interacts with ERN1 and TRAF2. Interaction with TRAF2 is facilitated under ER stress conditions, such as treatment with tunicamycin, and may promote TRAF2 phosphorylation. Interacts (via N-terminus) with STK25; the interaction promotes STK25 abundance at the level of protein expression and/or stability. In terms of processing, autophosphorylated. Phosphorylation at Ser-324 by ATM following DNA damage is required for activation of the p38/MAPK14 stress-activated MAPK cascade. Phosphorylated at Ser-324 and on Tyr residues during T cell activation. Phosphorylated by LRRK2.

The protein localises to the cytoplasm. Its subcellular location is the cell membrane. The protein resides in the membrane raft. It localises to the lipid droplet. It carries out the reaction L-seryl-[protein] + ATP = O-phospho-L-seryl-[protein] + ADP + H(+). The enzyme catalyses L-threonyl-[protein] + ATP = O-phospho-L-threonyl-[protein] + ADP + H(+). Functionally, serine/threonine-protein kinase that acts as a regulator of the p38/MAPK14 stress-activated MAPK cascade and of the MAPK8/JNK cascade. In response to DNA damage, involved in the G2/M transition DNA damage checkpoint by activating the p38/MAPK14 stress-activated MAPK cascade, probably by mediating phosphorylation of upstream MAP2K3 and MAP2K6 kinases. Inhibits basal activity of the MAPK8/JNK cascade and diminishes its activation in response to epidermal growth factor (EGF). Positively regulates canonical T cell receptor (TCR) signaling by preventing early PTPN6/SHP1-mediated inactivation of LCK, ensuring sustained TCR signaling that is required for optimal activation and differentiation of T cells. Phosphorylates PTPN6/SHP1 on 'Thr-394', leading to its polyubiquitination and subsequent proteasomal degradation. Required for cell surface expression of metalloprotease ADAM10 on type 1 transitional B cells which is necessary for their NOTCH-mediated development into marginal zone B cells. Also required for the NOTCH-mediated terminal differentiation of splenic conventional type 2 dendritic cells. Positively regulates osteoblast differentiation by acting as an upstream activator of the JNK pathway. Promotes JNK signaling in hepatocytes and positively regulates hepatocyte lipid storage by inhibiting beta-oxidation and triacylglycerol secretion while enhancing lipid synthesis. Restricts age-associated inflammation by negatively regulating differentiation of macrophages and their production of pro-inflammatory cytokines. Plays a role in negatively regulating the abundance of regulatory T cells in white adipose tissue. The polypeptide is Serine/threonine-protein kinase TAO3 (TAOK3) (Pongo abelii (Sumatran orangutan)).